Consider the following 444-residue polypeptide: Na(+)-translocating NADH-quinone reductase subunit A (444 aa).

Belongs to the NqrA family. Composed of six subunits; NqrA, NqrB, NqrC, NqrD, NqrE and NqrF.

The enzyme catalyses a ubiquinone + n Na(+)(in) + NADH + H(+) = a ubiquinol + n Na(+)(out) + NAD(+). NQR complex catalyzes the reduction of ubiquinone-1 to ubiquinol by two successive reactions, coupled with the transport of Na(+) ions from the cytoplasm to the periplasm. NqrA to NqrE are probably involved in the second step, the conversion of ubisemiquinone to ubiquinol. This is Na(+)-translocating NADH-quinone reductase subunit A from Shewanella amazonensis (strain ATCC BAA-1098 / SB2B).